The sequence spans 243 residues: uncharacterized protein (243 aa).

It localises to the nucleus. The protein localises to the nucleolus. This is an uncharacterized protein from Schizosaccharomyces pombe (strain 972 / ATCC 24843) (Fission yeast).